The primary structure comprises 1025 residues: Multidrug resistance protein MdtC (1025 aa).

12 helical membrane-spanning segments follow: residues 3–23 (FFAL…AITL), 333–353 (EVEQ…FLFL), 360–380 (IIPA…MYLC), 387–407 (LSLM…IVVL), 431–451 (VGFT…PLLL), 463–483 (FAVT…TLTP), 528–548 (LVGV…ISIP), 853–873 (VILI…LYES), 875–895 (VHPL…LLAL), 897–917 (LFNA…IGIV), 953–973 (PIMM…LSGG), and 984–1004 (ITIV…TPVV).

It belongs to the resistance-nodulation-cell division (RND) (TC 2.A.6) family. MdtC subfamily. Part of a tripartite efflux system composed of MdtA, MdtB and MdtC. MdtC forms a heteromultimer with MdtB.

It is found in the cell inner membrane. Functionally, the MdtABC tripartite complex confers resistance against novobiocin and deoxycholate. This is Multidrug resistance protein MdtC from Escherichia coli (strain SMS-3-5 / SECEC).